The chain runs to 738 residues: Multifunctional procollagen lysine hydroxylase and glycosyltransferase LH3 (738 aa).

Positions 1 to 24 (MTSSGPGPRFLLLLPLLLPPAASA) are cleaved as a signal peptide. A required for glycosyltransferase activity region spans residues 25–290 (SDRPRGRDPV…FCNQDRRTLP (266 aa)). 44–46 (VAT) provides a ligand contact to UDP. N-linked (GlcNAc...) asparagine glycosylation occurs at asparagine 63. 3 residues coordinate Mn(2+): aspartate 112, aspartate 115, and histidine 253. Position 112–114 (112–114 (DSY)) interacts with UDP. 256-259 (GPTK) contributes to the UDP binding site. Disulfide bonds link cysteine 279-cysteine 282 and cysteine 379-cysteine 385. The tract at residues 295–520 (PPRVFLAVFV…EFGRLLATSR (226 aa)) is accessory region. N-linked (GlcNAc...) asparagine glycosylation is present at asparagine 548. Residues cysteine 563 and cysteine 698 are joined by a disulfide bond. 2-oxoglutarate contacts are provided by arginine 599 and tyrosine 656. Residues 647–738 (RAVMNFVVRY…RYIMVSFVDP (92 aa)) form the Fe2OG dioxygenase domain. Residues histidine 667 and aspartate 669 each coordinate Fe cation. The important for dimerization stretch occupies residues 672-715 (TFTLNVALNHKGLDYEGGGCRFLRYDCVISSPRKGWALLHPGRL). Position 676 (asparagine 676) interacts with 2-oxoglutarate. Fe cation is bound at residue histidine 719. Arginine 729 provides a ligand contact to 2-oxoglutarate.

Homodimer. It depends on Fe(2+) as a cofactor. L-ascorbate serves as cofactor. Requires Mn(2+) as cofactor.

The protein localises to the rough endoplasmic reticulum. Its subcellular location is the endoplasmic reticulum lumen. It is found in the endoplasmic reticulum membrane. It localises to the secreted. The protein resides in the extracellular space. The catalysed reaction is L-lysyl-[collagen] + 2-oxoglutarate + O2 = (5R)-5-hydroxy-L-lysyl-[collagen] + succinate + CO2. The enzyme catalyses (5R)-5-hydroxy-L-lysyl-[collagen] + UDP-alpha-D-galactose = (5R)-5-O-(beta-D-galactosyl)-5-hydroxy-L-lysyl-[collagen] + UDP + H(+). It carries out the reaction (5R)-5-O-(beta-D-galactosyl)-5-hydroxy-L-lysyl-[collagen] + UDP-alpha-D-glucose = (5R)-5-O-[alpha-D-glucosyl-(1-&gt;2)-beta-D-galactosyl]-5-hydroxy-L-lysyl-[collagen] + UDP + H(+). In terms of biological role, multifunctional enzyme that catalyzes a series of post-translational modifications on Lys residues in procollagen. Plays a redundant role in catalyzing the formation of hydroxylysine residues in -Xaa-Lys-Gly- sequences in collagens. Plays a redundant role in catalyzing the transfer of galactose onto hydroxylysine groups, giving rise to galactosyl 5-hydroxylysine. Has an essential role by catalyzing the subsequent transfer of glucose moieties, giving rise to 1,2-glucosylgalactosyl-5-hydroxylysine residues. Catalyzes hydroxylation and glycosylation of Lys residues in the MBL1 collagen-like domain, giving rise to hydroxylysine and 1,2-glucosylgalactosyl-5-hydroxylysine residues. Catalyzes hydroxylation and glycosylation of Lys residues in the ADIPOQ collagen-like domain, giving rise to hydroxylysine and 1,2-glucosylgalactosyl-5-hydroxylysine residues. Essential for normal biosynthesis and secretion of type IV collagens. Essential for normal formation of basement membranes. The chain is Multifunctional procollagen lysine hydroxylase and glycosyltransferase LH3 (PLOD3) from Pongo abelii (Sumatran orangutan).